The following is a 167-amino-acid chain: NADH-quinone oxidoreductase subunit B 1 (167 aa).

[4Fe-4S] cluster is bound by residues Cys-38, Cys-39, Cys-104, and Cys-133.

This sequence belongs to the complex I 20 kDa subunit family. NDH-1 is composed of 14 different subunits. Subunits NuoB, C, D, E, F, and G constitute the peripheral sector of the complex. The cofactor is [4Fe-4S] cluster.

The protein resides in the cell membrane. It carries out the reaction a quinone + NADH + 5 H(+)(in) = a quinol + NAD(+) + 4 H(+)(out). Its function is as follows. NDH-1 shuttles electrons from NADH, via FMN and iron-sulfur (Fe-S) centers, to quinones in the respiratory chain. The immediate electron acceptor for the enzyme in this species is believed to be ubiquinone. Couples the redox reaction to proton translocation (for every two electrons transferred, four hydrogen ions are translocated across the cytoplasmic membrane), and thus conserves the redox energy in a proton gradient. This is NADH-quinone oxidoreductase subunit B 1 from Roseiflexus castenholzii (strain DSM 13941 / HLO8).